The chain runs to 543 residues: Chaperonin GroEL (543 aa).

ATP is bound by residues 29-32, 86-90, glycine 413, and aspartate 504; these read TVGP and DGTTT.

Belongs to the chaperonin (HSP60) family. As to quaternary structure, forms a cylinder of 14 subunits composed of two heptameric rings stacked back-to-back. Interacts with the co-chaperonin GroES.

It localises to the cytoplasm. It catalyses the reaction ATP + H2O + a folded polypeptide = ADP + phosphate + an unfolded polypeptide.. Together with its co-chaperonin GroES, plays an essential role in assisting protein folding. The GroEL-GroES system forms a nano-cage that allows encapsulation of the non-native substrate proteins and provides a physical environment optimized to promote and accelerate protein folding. This chain is Chaperonin GroEL, found in Mycoplasma pneumoniae (strain ATCC 29342 / M129 / Subtype 1) (Mycoplasmoides pneumoniae).